The sequence spans 237 residues: Mitochondrial inner membrane protease atp23 (237 aa).

Positions 1–18 are enriched in polar residues; sequence MSTSESSNNGSQPGNQDT. The interval 1 to 24 is disordered; sequence MSTSESSNNGSQPGNQDTGYIPGD. H136 provides a ligand contact to a divalent metal cation. E137 is a catalytic residue. Residue H140 participates in a divalent metal cation binding.

This sequence belongs to the peptidase M76 family.

It is found in the mitochondrion inner membrane. Has a dual role in the assembly of mitochondrial ATPase. Acts as a protease that removes N-terminal residues of mitochondrial ATPase CF(0) subunit 6 at the intermembrane space side. Also involved in the correct assembly of the membrane-embedded ATPase CF(0) particle, probably mediating association of subunit 6 with the subunit 9 ring. The polypeptide is Mitochondrial inner membrane protease atp23 (atp23) (Aspergillus niger (strain ATCC MYA-4892 / CBS 513.88 / FGSC A1513)).